The chain runs to 151 residues: Putative pre-16S rRNA nuclease (151 aa).

This sequence belongs to the YqgF nuclease family.

It localises to the cytoplasm. Could be a nuclease involved in processing of the 5'-end of pre-16S rRNA. The protein is Putative pre-16S rRNA nuclease of Paraburkholderia phymatum (strain DSM 17167 / CIP 108236 / LMG 21445 / STM815) (Burkholderia phymatum).